The following is a 185-amino-acid chain: Ribosome-recycling factor (185 aa).

This sequence belongs to the RRF family.

The protein localises to the cytoplasm. Its function is as follows. Responsible for the release of ribosomes from messenger RNA at the termination of protein biosynthesis. May increase the efficiency of translation by recycling ribosomes from one round of translation to another. This Actinobacillus pleuropneumoniae serotype 5b (strain L20) protein is Ribosome-recycling factor.